The following is a 482-amino-acid chain: MKFIIKLFPEITIKSQSVRLRFIKILTGNIRNVLKHYDETLAVVRHWDNIEVRAKDENQRLAIRDALTRIPGIHHILEVEDVPFTDMHDIFEKALAQYREQLEGKTFCVRVKRRGKHEFSSIEVERYVGGGLNQHIESARVKLTNPDVTVHLEVEDDRLLLIKGRYEGIGGFPIGTQEDVLSLISGGFDSGVSSYMLMRRGCRVHYCFFNLGGAAHEIGVRQVAHYLWNRFGSSHRVRFVAINFEPVVGEILEKVDDGQMGVVLKRMMVRAASKVAERYGVQALVTGEALGQVSSQTLTNLRLIDNVSDTLILRPLISYDKEHIINLARQIGTEDFARTMPEYCGVISKSPTVKAIKAKIEAEEENFDFSILDKVVEEANNVDIREIAQQTQQEVVEVETVSGFGPNDVILDIRSVDEQDDKPLKVEGVDVVSLPFYKLSTKFGDLDQSKTWLLWCERGVMSRLQALYLREQGFANVKVYRP.

A THUMP domain is found at Leu61–Arg165. ATP contacts are provided by residues Leu183–Ile184, Lys265, Gly287, and Gln296. Cys344 and Cys456 are joined by a disulfide. The 79-residue stretch at Phe404–Pro482 folds into the Rhodanese domain. Cys456 acts as the Cysteine persulfide intermediate in catalysis.

This sequence belongs to the ThiI family.

The protein resides in the cytoplasm. The catalysed reaction is [ThiI sulfur-carrier protein]-S-sulfanyl-L-cysteine + a uridine in tRNA + 2 reduced [2Fe-2S]-[ferredoxin] + ATP + H(+) = [ThiI sulfur-carrier protein]-L-cysteine + a 4-thiouridine in tRNA + 2 oxidized [2Fe-2S]-[ferredoxin] + AMP + diphosphate. The enzyme catalyses [ThiS sulfur-carrier protein]-C-terminal Gly-Gly-AMP + S-sulfanyl-L-cysteinyl-[cysteine desulfurase] + AH2 = [ThiS sulfur-carrier protein]-C-terminal-Gly-aminoethanethioate + L-cysteinyl-[cysteine desulfurase] + A + AMP + 2 H(+). The protein operates within cofactor biosynthesis; thiamine diphosphate biosynthesis. Its function is as follows. Catalyzes the ATP-dependent transfer of a sulfur to tRNA to produce 4-thiouridine in position 8 of tRNAs, which functions as a near-UV photosensor. Also catalyzes the transfer of sulfur to the sulfur carrier protein ThiS, forming ThiS-thiocarboxylate. This is a step in the synthesis of thiazole, in the thiamine biosynthesis pathway. The sulfur is donated as persulfide by IscS. The polypeptide is tRNA sulfurtransferase (Salmonella heidelberg (strain SL476)).